We begin with the raw amino-acid sequence, 274 residues long: MNPEHSPLGKATVYANQYDASLLFPIPRAGAREQIGIGAPLPFFGTDIWNAYELSWLNARGKPQIAIATFYVPAESPNIVESKSFKLYLGSFAQTAFESADAVRDALKRDVSAACGASVTVRLATPAEFRKLQMDELDGLSLDRLDLDAHVYETDPSFLTASHGEAPVEETLVTDLLKSNCPVTGQPDWGSVQIHYVGAPIDHAGLLRYIISFRNHTGFHEQCVERIFVDILRACQPVKLAVYARYTRRGGLDINPFRTNYNQPMPDNARTARQ.

80–82 contributes to the substrate binding site; sequence VES. An NADPH-binding site is contributed by 82 to 83; sequence SK. C181 acts as the Thioimide intermediate in catalysis. D188 serves as the catalytic Proton donor. 220-221 contributes to the substrate binding site; it reads HE. Residue 249 to 250 coordinates NADPH; sequence RG.

It belongs to the GTP cyclohydrolase I family. QueF type 2 subfamily. Homodimer.

The protein resides in the cytoplasm. It catalyses the reaction 7-aminomethyl-7-carbaguanine + 2 NADP(+) = 7-cyano-7-deazaguanine + 2 NADPH + 3 H(+). The protein operates within tRNA modification; tRNA-queuosine biosynthesis. Catalyzes the NADPH-dependent reduction of 7-cyano-7-deazaguanine (preQ0) to 7-aminomethyl-7-deazaguanine (preQ1). This chain is NADPH-dependent 7-cyano-7-deazaguanine reductase, found in Burkholderia pseudomallei (strain 1106a).